Reading from the N-terminus, the 199-residue chain is 5'-deoxynucleotidase CKO_00504 (199 aa).

Substrate-binding positions include 18 to 19 (RW) and histidine 33. The region spanning 30–142 (VSEHSLQVAM…VKQADALCAY (113 aa)) is the HD domain. Positions 33, 68, and 69 each coordinate a divalent metal cation. Residues aspartate 69, 77–80 (DLPT), and aspartate 137 each bind substrate. Position 137 (aspartate 137) interacts with a divalent metal cation.

This sequence belongs to the 5DNU family. In terms of assembly, homodimer. Requires a divalent metal cation as cofactor.

It is found in the cytoplasm. The enzyme catalyses a 2'-deoxyribonucleoside 5'-phosphate + H2O = a 2'-deoxyribonucleoside + phosphate. Catalyzes the strictly specific dephosphorylation of 2'-deoxyribonucleoside 5'-monophosphates. This is 5'-deoxynucleotidase CKO_00504 from Citrobacter koseri (strain ATCC BAA-895 / CDC 4225-83 / SGSC4696).